We begin with the raw amino-acid sequence, 348 residues long: Phosphate acyltransferase (348 aa).

It belongs to the PlsX family. As to quaternary structure, homodimer. Probably interacts with PlsY.

Its subcellular location is the cytoplasm. The catalysed reaction is a fatty acyl-[ACP] + phosphate = an acyl phosphate + holo-[ACP]. The protein operates within lipid metabolism; phospholipid metabolism. Functionally, catalyzes the reversible formation of acyl-phosphate (acyl-PO(4)) from acyl-[acyl-carrier-protein] (acyl-ACP). This enzyme utilizes acyl-ACP as fatty acyl donor, but not acyl-CoA. In Lactiplantibacillus plantarum (strain ATCC BAA-793 / NCIMB 8826 / WCFS1) (Lactobacillus plantarum), this protein is Phosphate acyltransferase.